The following is a 207-amino-acid chain: Putative 3-methyladenine DNA glycosylase (207 aa).

The protein belongs to the DNA glycosylase MPG family.

In Listeria welshimeri serovar 6b (strain ATCC 35897 / DSM 20650 / CCUG 15529 / CIP 8149 / NCTC 11857 / SLCC 5334 / V8), this protein is Putative 3-methyladenine DNA glycosylase.